A 601-amino-acid polypeptide reads, in one-letter code: Rhizobactin siderophore biosynthesis protein RhbF (601 aa).

The protein belongs to the IucA/IucC family.

Its pathway is siderophore biosynthesis; rhizobactin biosynthesis. The chain is Rhizobactin siderophore biosynthesis protein RhbF (rhbF) from Rhizobium meliloti (strain 1021) (Ensifer meliloti).